The following is a 98-amino-acid chain: Co-chaperonin GroES (98 aa).

It belongs to the GroES chaperonin family. As to quaternary structure, heptamer of 7 subunits arranged in a ring. Interacts with the chaperonin GroEL.

It localises to the cytoplasm. Its function is as follows. Together with the chaperonin GroEL, plays an essential role in assisting protein folding. The GroEL-GroES system forms a nano-cage that allows encapsulation of the non-native substrate proteins and provides a physical environment optimized to promote and accelerate protein folding. GroES binds to the apical surface of the GroEL ring, thereby capping the opening of the GroEL channel. This chain is Co-chaperonin GroES, found in Renibacterium salmoninarum (strain ATCC 33209 / DSM 20767 / JCM 11484 / NBRC 15589 / NCIMB 2235).